We begin with the raw amino-acid sequence, 873 residues long: Bifunctional uridylyltransferase/uridylyl-removing enzyme (873 aa).

The tract at residues 1–332 is uridylyltransferase; sequence MAFQSPLTFN…NGGETEPAVI (332 aa). Residues 333–692 are uridylyl-removing; that stretch reads INEDFQRRGR…MSKKATRGGT (360 aa). An HD domain is found at 451–573; that stretch reads VDEHSVRLLN…VRDEERLEYL (123 aa). ACT domains lie at 693–773 and 800–873; these read EVFV…VKTR and LMEL…ELAP.

This sequence belongs to the GlnD family. Mg(2+) is required as a cofactor.

It catalyses the reaction [protein-PII]-L-tyrosine + UTP = [protein-PII]-uridylyl-L-tyrosine + diphosphate. The enzyme catalyses [protein-PII]-uridylyl-L-tyrosine + H2O = [protein-PII]-L-tyrosine + UMP + H(+). Its activity is regulated as follows. Uridylyltransferase (UTase) activity is inhibited by glutamine, while glutamine activates uridylyl-removing (UR) activity. In terms of biological role, modifies, by uridylylation and deuridylylation, the PII regulatory proteins (GlnB and homologs), in response to the nitrogen status of the cell that GlnD senses through the glutamine level. Under low glutamine levels, catalyzes the conversion of the PII proteins and UTP to PII-UMP and PPi, while under higher glutamine levels, GlnD hydrolyzes PII-UMP to PII and UMP (deuridylylation). Thus, controls uridylylation state and activity of the PII proteins, and plays an important role in the regulation of nitrogen assimilation and metabolism. The sequence is that of Bifunctional uridylyltransferase/uridylyl-removing enzyme from Vibrio vulnificus (strain CMCP6).